The sequence spans 298 residues: MALDFWKSSHAQQWIFDKTEIWKQRAEDMKTYSEEEYSRLNIFWANFITAVATECAHSQANVGCKLRQQVIATAIVYFKRFYLRQSFRDMCPFLVASTALFLACKVEEHTTLSVSSFLKNTALVLPKRWGVAFETNSAKNGVLYDSEFILVEILDCCLVVHHATRPMFELLEDWKQHTLTSTNTPVKDFDQIEIQCQKVVNDTLRCDVGLMFAPHCIGLASISVGMELMGRGEELEDWLVEVDTDMDKLADCINQIYTMYQLWRSFDEKEEVKKLMAKLPKPNTPIPPPQQQQSSYHM.

The region spanning 46-162 is the Cyclin N-terminal domain; that stretch reads NFITAVATEC…ILDCCLVVHH (117 aa). The segment at 278-298 is disordered; sequence KLPKPNTPIPPPQQQQSSYHM.

It belongs to the cyclin family. Cyclin C subfamily. Component of the Mediator complex.

The protein resides in the nucleus. Functionally, component of the Mediator complex, a coactivator involved in regulated gene transcription of nearly all RNA polymerase II-dependent genes. Mediator functions as a bridge to convey information from gene-specific regulatory proteins to the basal RNA polymerase II transcription machinery. Mediator is recruited to promoters by direct interactions with regulatory proteins and serves as a scaffold for the assembly of a functional preinitiation complex with RNA polymerase II and the general transcription factors. Binds to and activates cyclin-dependent kinase cdk-8 that phosphorylates the CTD (C-terminal domain) of the large subunit of RNA polymerase II (RNAp II), which may inhibit the formation of a transcription initiation complex. This chain is Cyclin-C (cic-1), found in Caenorhabditis briggsae.